A 256-amino-acid chain; its full sequence is 4-hydroxy-tetrahydrodipicolinate reductase (256 aa).

Residue 8–13 participates in NAD(+) binding; it reads GASGKM. Lys-36 contacts NADP(+). NAD(+)-binding positions include 87–89 and 111–114; these read GTT and ATNM. His-143 serves as the catalytic Proton donor/acceptor. Position 144 (His-144) interacts with (S)-2,3,4,5-tetrahydrodipicolinate. The active-site Proton donor is Lys-147. 153-154 lines the (S)-2,3,4,5-tetrahydrodipicolinate pocket; sequence GT.

It belongs to the DapB family.

It is found in the cytoplasm. The enzyme catalyses (S)-2,3,4,5-tetrahydrodipicolinate + NAD(+) + H2O = (2S,4S)-4-hydroxy-2,3,4,5-tetrahydrodipicolinate + NADH + H(+). It catalyses the reaction (S)-2,3,4,5-tetrahydrodipicolinate + NADP(+) + H2O = (2S,4S)-4-hydroxy-2,3,4,5-tetrahydrodipicolinate + NADPH + H(+). The protein operates within amino-acid biosynthesis; L-lysine biosynthesis via DAP pathway; (S)-tetrahydrodipicolinate from L-aspartate: step 4/4. Functionally, catalyzes the conversion of 4-hydroxy-tetrahydrodipicolinate (HTPA) to tetrahydrodipicolinate. The chain is 4-hydroxy-tetrahydrodipicolinate reductase from Campylobacter concisus (strain 13826).